Consider the following 937-residue polypeptide: MSDYKTTLNLPETGFPMRGDLAKREPDMLKRWYEQDLYGIIRNAKKGKKTFILHDGPPYANGSIHIGHSVNKILKDIIVKSKGLSGYDSPYVPGWDCHGLPIELKVEQLIGKPGEKVSAAEFRAECRKYAAEQVAGQKADFIRLGVLGDWDRPYLTMDFKTEANIIRALGRIIENGHLHKGAKPVHWCADCGSALAEAEVEYYDKTSPSIDVAFNASDVAAVLAKFGVSSVDGPVSLVIWTTTPWTLPANRAISLNAEFDYQLVQIDGQALILAADLVESVMKRAGVTQWTVLGDCKGADLELLRFKHPFLSFDVPAILGDHVTLDAGTGAVHTAGGHGPDDYVISQKYNLEIANPVGPNGCYLSGTYPELDGKFVFKANDLIVEILREKGMLLHVEKLQHSYPCCWRHKSPIIFRATPQWFVSMDQKGLRKQSLSEIKGVQWIPDWGQARIEAMVANRPDWCISRQRTWGVPMSLFVHKETEELHPRTAELIEAVAKRVEADGIQAWWDLDPADVLGADADNYVKVPDTLDVWFDSGSTHASVVDVRPEFGGHAADMYLEGSDQHRGWFMSSLMISTAIKGKAPYRQVLTHGFTVDGQGRKMSKSIGNTVSPQDVMNKLGADILRLWIGSTDYSGEIAVSDEILKRSADAYRRIRNTARFLLANLNGFDPQKDSVKPEDMVVLDRWAVGCAKAAQEEILEAYESYDFHRVVQRLMQFCSIEMGSFYLDIIKDRQYTAKSDSVARRSCQTALYHISEALVRWMAPIMSFTADEIWSYLPGKRAQYVFTEEWYDGLFGLDASETMNDAFWADILKVRSEVNKVIEQARNDKRIGGSLEASVTLYADANLAGKLNQLRQELHFALLTSKALVERYENAPDSAQATELTGLKIALSEAEGHKCPRCWHYETDIGSNADHPEVCGRCATNVGGNGEERKFV.

The 'HIGH' region signature appears at P58 to H68. Residue E561 participates in L-isoleucyl-5'-AMP binding. The 'KMSKS' region signature appears at K602–S606. K605 serves as a coordination point for ATP. Zn(2+) contacts are provided by C900, C903, C920, and C923.

Belongs to the class-I aminoacyl-tRNA synthetase family. IleS type 1 subfamily. As to quaternary structure, monomer. Requires Zn(2+) as cofactor.

It localises to the cytoplasm. It carries out the reaction tRNA(Ile) + L-isoleucine + ATP = L-isoleucyl-tRNA(Ile) + AMP + diphosphate. Its function is as follows. Catalyzes the attachment of isoleucine to tRNA(Ile). As IleRS can inadvertently accommodate and process structurally similar amino acids such as valine, to avoid such errors it has two additional distinct tRNA(Ile)-dependent editing activities. One activity is designated as 'pretransfer' editing and involves the hydrolysis of activated Val-AMP. The other activity is designated 'posttransfer' editing and involves deacylation of mischarged Val-tRNA(Ile). This Pectobacterium carotovorum subsp. carotovorum (strain PC1) protein is Isoleucine--tRNA ligase.